Consider the following 242-residue polypeptide: Probable transcriptional regulatory protein LBA0733 (242 aa).

Positions 1–22 are disordered; it reads MSGHSKWHNIQGRKNAQDAKRG.

It belongs to the TACO1 family.

The protein localises to the cytoplasm. The protein is Probable transcriptional regulatory protein LBA0733 of Lactobacillus acidophilus (strain ATCC 700396 / NCK56 / N2 / NCFM).